The primary structure comprises 408 residues: Peptidase T (408 aa).

H78 contributes to the Zn(2+) binding site. D80 is an active-site residue. Position 140 (D140) interacts with Zn(2+). Catalysis depends on E173, which acts as the Proton acceptor. Residues E174, D196, and H379 each coordinate Zn(2+).

Belongs to the peptidase M20B family. Requires Zn(2+) as cofactor.

Its subcellular location is the cytoplasm. It catalyses the reaction Release of the N-terminal residue from a tripeptide.. Cleaves the N-terminal amino acid of tripeptides. This is Peptidase T from Shigella boydii serotype 18 (strain CDC 3083-94 / BS512).